A 210-amino-acid polypeptide reads, in one-letter code: Large ribosomal subunit protein uL3 (210 aa).

The disordered stretch occupies residues 119–143 (GYQGNIKKDGQSRGPMAHGSRYHRR).

The protein belongs to the universal ribosomal protein uL3 family. As to quaternary structure, part of the 50S ribosomal subunit. Forms a cluster with proteins L14 and L19.

Functionally, one of the primary rRNA binding proteins, it binds directly near the 3'-end of the 23S rRNA, where it nucleates assembly of the 50S subunit. This Lacticaseibacillus casei (strain BL23) (Lactobacillus casei) protein is Large ribosomal subunit protein uL3.